The sequence spans 205 residues: Putative 3-methyladenine DNA glycosylase (205 aa).

Belongs to the DNA glycosylase MPG family.

This is Putative 3-methyladenine DNA glycosylase from Clostridium perfringens (strain 13 / Type A).